The sequence spans 88 residues: Large ribosomal subunit protein bL27 (88 aa).

Residues 1-24 (MAHKKAGGSSRNGRDSEGRRLGVK) are disordered.

This sequence belongs to the bacterial ribosomal protein bL27 family.

This chain is Large ribosomal subunit protein bL27, found in Methylobacterium radiotolerans (strain ATCC 27329 / DSM 1819 / JCM 2831 / NBRC 15690 / NCIMB 10815 / 0-1).